Consider the following 84-residue polypeptide: Small ribosomal subunit protein uS17 (84 aa).

Belongs to the universal ribosomal protein uS17 family. In terms of assembly, part of the 30S ribosomal subunit.

In terms of biological role, one of the primary rRNA binding proteins, it binds specifically to the 5'-end of 16S ribosomal RNA. This is Small ribosomal subunit protein uS17 from Clostridium beijerinckii (strain ATCC 51743 / NCIMB 8052) (Clostridium acetobutylicum).